The primary structure comprises 75 residues: Small ribosomal subunit protein eS31 (75 aa).

Zn(2+) contacts are provided by Cys-41, Cys-44, Cys-60, and Cys-63. Residues 41–63 (CPRCGSIMAHHLKPNERWSCGKC) form a C4-type zinc finger.

It belongs to the eukaryotic ribosomal protein eS31 family. Part of the 30S ribosomal subunit. It depends on Zn(2+) as a cofactor.

This Saccharolobus solfataricus (strain ATCC 35092 / DSM 1617 / JCM 11322 / P2) (Sulfolobus solfataricus) protein is Small ribosomal subunit protein eS31.